We begin with the raw amino-acid sequence, 282 residues long: Pantothenate synthetase (282 aa).

An ATP-binding site is contributed by 31–38; sequence MGALHDGH. His-38 (proton donor) is an active-site residue. Gln-62 provides a ligand contact to (R)-pantoate. Gln-62 contributes to the beta-alanine binding site. 148-151 provides a ligand contact to ATP; the sequence is GKKD. Residue Gln-154 participates in (R)-pantoate binding. Residues Val-177 and 185-188 each bind ATP; that span reads KSSR.

This sequence belongs to the pantothenate synthetase family. Homodimer.

The protein resides in the cytoplasm. The enzyme catalyses (R)-pantoate + beta-alanine + ATP = (R)-pantothenate + AMP + diphosphate + H(+). It functions in the pathway cofactor biosynthesis; (R)-pantothenate biosynthesis; (R)-pantothenate from (R)-pantoate and beta-alanine: step 1/1. In terms of biological role, catalyzes the condensation of pantoate with beta-alanine in an ATP-dependent reaction via a pantoyl-adenylate intermediate. The protein is Pantothenate synthetase of Staphylococcus saprophyticus subsp. saprophyticus (strain ATCC 15305 / DSM 20229 / NCIMB 8711 / NCTC 7292 / S-41).